A 60-amino-acid polypeptide reads, in one-letter code: Potassium channel toxin alpha-KTx 12.7 (60 aa).

Residues 1–22 (MSNMPVLIITLLLFSMYISTAA) form the signal peptide. Intrachain disulfides connect Cys-30–Cys-51, Cys-36–Cys-56, and Cys-40–Cys-58.

It belongs to the short scorpion toxin superfamily. Potassium channel inhibitor family. Alpha-KTx 12 subfamily. As to expression, expressed by the venom gland.

It localises to the secreted. Functionally, inhibits voltage-gated potassium channels. This Lychas mucronatus (Chinese swimming scorpion) protein is Potassium channel toxin alpha-KTx 12.7.